Reading from the N-terminus, the 89-residue chain is Small ribosomal subunit protein bS16 (89 aa).

This sequence belongs to the bacterial ribosomal protein bS16 family.

This Geobacillus stearothermophilus (Bacillus stearothermophilus) protein is Small ribosomal subunit protein bS16.